The chain runs to 1056 residues: 120.7 kDa protein in NOF-FB transposable element (1056 aa).

A disordered region spans residues 716-749; sequence KTIKPTEGNDAEDNDTDDENKEMDLSEQPKEKPR. Residues 724–736 show a composition bias toward acidic residues; the sequence is NDAEDNDTDDENK. The span at 737-749 shows a compositional bias: basic and acidic residues; sequence EMDLSEQPKEKPR.

It is found in the nucleus. Functionally, may be involved in the transposition of NOF-FB and other FB elements. The sequence is that of 120.7 kDa protein in NOF-FB transposable element (NOF) from Drosophila melanogaster (Fruit fly).